The following is a 500-amino-acid chain: Plexin domain-containing protein 1 (500 aa).

The N-terminal stretch at 1–18 is a signal peptide; sequence MRGELWLLVLVLREAARA. Over 19–426 the chain is Extracellular; the sequence is LSPQPGAGHD…TKGTPVHLGT (408 aa). 2 disordered regions span residues 20 to 39 and 46 to 78; these read SPQP…AAKG and RRAR…DTLP. O-linked (Xyl...) (chondroitin sulfate) serine glycosylation occurs at S33. Over residues 47–60 the composition is skewed to basic and acidic residues; sequence RARESPGHVSEPDR. N-linked (GlcNAc...) asparagine glycans are attached at residues N80 and N197. The segment at 359-379 is disordered; sequence FQDEDHDSASPDTSFSPYDGD. Polar residues predominate over residues 368–379; it reads SPDTSFSPYDGD. Residues 427 to 447 form a helical membrane-spanning segment; it reads IVGIVLAVLLVAAIILAGIYI. Residues 448 to 500 are Cytoplasmic-facing; it reads NGHPTSNAALFFIERRPHHWPAMKFRSHPDHSTYAEVEPSGHEKEGFMEAEQC. Positions 479–494 are enriched in basic and acidic residues; that stretch reads STYAEVEPSGHEKEGF. Residues 479–500 are disordered; it reads STYAEVEPSGHEKEGFMEAEQC.

The protein belongs to the plexin family. As to quaternary structure, interacts with NID1. May interact with CTTN. In terms of processing, N-glycosylated. Detected in urine (at protein level). Detected in endothelial cells from colorectal cancer, and in endothelial cells from primary cancers of the lung, liver, pancreas, breast and brain. Not detectable in endothelial cells from normal tissue. Expressed in fibrovascular membrane with increased expression in individuals with proliferative diabetic retinopathy.

The protein resides in the secreted. It localises to the cell membrane. It is found in the cell junction. Its subcellular location is the tight junction. The protein localises to the cytoplasm. Its function is as follows. Plays a critical role in endothelial cell capillary morphogenesis. This is Plexin domain-containing protein 1 (PLXDC1) from Homo sapiens (Human).